The sequence spans 227 residues: Cytidylate kinase (227 aa).

12 to 20 (GPSGAGKGT) lines the ATP pocket.

The protein belongs to the cytidylate kinase family. Type 1 subfamily.

It is found in the cytoplasm. It carries out the reaction CMP + ATP = CDP + ADP. The catalysed reaction is dCMP + ATP = dCDP + ADP. In Marinomonas sp. (strain MWYL1), this protein is Cytidylate kinase.